We begin with the raw amino-acid sequence, 113 residues long: Protein Wnt-10 (113 aa).

A lipid anchor (O-palmitoleoyl serine; by PORCN) is attached at S1. A disulfide bridge connects residues C79 and C94.

It belongs to the Wnt family. Post-translationally, palmitoleoylation is required for efficient binding to frizzled receptors. Depalmitoleoylation leads to Wnt signaling pathway inhibition.

The protein resides in the secreted. It localises to the extracellular space. The protein localises to the extracellular matrix. In terms of biological role, ligand for members of the frizzled family of seven transmembrane receptors. Probable developmental protein. May be a signaling molecule which affects the development of discrete regions of tissues. Is likely to signal over only few cell diameters. The chain is Protein Wnt-10 (WNT-10) from Eptatretus stoutii (Pacific hagfish).